Consider the following 275-residue polypeptide: N-(5'-phosphoribosyl)anthranilate isomerase 2, chloroplastic (275 aa).

A chloroplast-targeting transit peptide spans 1–32 (MSTGISTDLHVHFGALNFSKTYKSGLSNRTVS).

This sequence belongs to the TrpF family. As to expression, expressed in roots and shoots.

Its subcellular location is the plastid. It localises to the chloroplast. It carries out the reaction N-(5-phospho-beta-D-ribosyl)anthranilate = 1-(2-carboxyphenylamino)-1-deoxy-D-ribulose 5-phosphate. The protein operates within amino-acid biosynthesis; L-tryptophan biosynthesis; L-tryptophan from chorismate: step 3/5. In Arabidopsis thaliana (Mouse-ear cress), this protein is N-(5'-phosphoribosyl)anthranilate isomerase 2, chloroplastic (PAI2).